Consider the following 239-residue polypeptide: Ribonuclease 3 (239 aa).

The 124-residue stretch at 18-141 (YLTLEKALGY…LMAGVYLEAG (124 aa)) folds into the RNase III domain. Position 54 (E54) interacts with Mg(2+). D58 is a catalytic residue. Positions 127 and 130 each coordinate Mg(2+). E130 is a catalytic residue. In terms of domain architecture, DRBM spans 168-237 (DYKTALQELT…AYQALQKLKE (70 aa)).

Belongs to the ribonuclease III family. As to quaternary structure, homodimer. Mg(2+) is required as a cofactor.

The protein resides in the cytoplasm. It catalyses the reaction Endonucleolytic cleavage to 5'-phosphomonoester.. In terms of biological role, digests double-stranded RNA. Involved in the processing of primary rRNA transcript to yield the immediate precursors to the large and small rRNAs (23S and 16S). Processes some mRNAs, and tRNAs when they are encoded in the rRNA operon. Processes pre-crRNA and tracrRNA of type II CRISPR loci if present in the organism. This is Ribonuclease 3 from Helicobacter pylori (strain J99 / ATCC 700824) (Campylobacter pylori J99).